The chain runs to 80 residues: Acyl carrier protein (80 aa).

The 76-residue stretch at 4-79 (ANVEQKVKNI…DAVNYITTHK (76 aa)) folds into the Carrier domain. O-(pantetheine 4'-phosphoryl)serine is present on S39.

The protein belongs to the acyl carrier protein (ACP) family. Post-translationally, 4'-phosphopantetheine is transferred from CoA to a specific serine of apo-ACP by AcpS. This modification is essential for activity because fatty acids are bound in thioester linkage to the sulfhydryl of the prosthetic group.

Its subcellular location is the cytoplasm. It participates in lipid metabolism; fatty acid biosynthesis. Carrier of the growing fatty acid chain in fatty acid biosynthesis. This Anaeromyxobacter sp. (strain Fw109-5) protein is Acyl carrier protein.